We begin with the raw amino-acid sequence, 92 residues long: Small ribosomal subunit protein uS19 (92 aa).

It belongs to the universal ribosomal protein uS19 family.

Protein S19 forms a complex with S13 that binds strongly to the 16S ribosomal RNA. In Granulibacter bethesdensis (strain ATCC BAA-1260 / CGDNIH1), this protein is Small ribosomal subunit protein uS19.